The following is a 478-amino-acid chain: tRNA modification GTPase MnmE (478 aa).

Residues Arg36, Glu94, and Lys133 each contribute to the (6S)-5-formyl-5,6,7,8-tetrahydrofolate site. Residues 230-402 form the TrmE-type G domain; it reads GIHVVLAGRP…LVETLCAKVG (173 aa). Residue Asn240 coordinates K(+). Residues 240–245, 259–265, and 284–287 each bind GTP; these read NAGKSS, TDVAGTT, and DTAG. Ser244 is a Mg(2+) binding site. K(+) is bound by residues Thr259, Val261, and Thr264. Thr265 lines the Mg(2+) pocket. Lys478 is a binding site for (6S)-5-formyl-5,6,7,8-tetrahydrofolate.

It belongs to the TRAFAC class TrmE-Era-EngA-EngB-Septin-like GTPase superfamily. TrmE GTPase family. Homodimer. Heterotetramer of two MnmE and two MnmG subunits. It depends on K(+) as a cofactor.

It is found in the cytoplasm. Functionally, exhibits a very high intrinsic GTPase hydrolysis rate. Involved in the addition of a carboxymethylaminomethyl (cmnm) group at the wobble position (U34) of certain tRNAs, forming tRNA-cmnm(5)s(2)U34. In Psychrobacter arcticus (strain DSM 17307 / VKM B-2377 / 273-4), this protein is tRNA modification GTPase MnmE.